A 448-amino-acid polypeptide reads, in one-letter code: MITIKQGLDLPIAGKPEQVIHNGNTVNEVAVLGEEYVGMRPSMKVREGDVVKKGQVLFEDKKNAGVVFTAPASGTIVAINRGEKRVLQSVVIKVEGDEQVTFERYNASELSSLTADQVKQNLVNSGLWTAFRTRPFSKVPALDAVPSSIFVNAMDTNPLATDPEVVLNEHKQDFVDGLTVLSRLFDGQKIIHLCRAPDSNIPTAEVANVKVTSFAGPHPAGLSGTHIHFIDPVSVTKSVWYLNYQDVIAIGKLFTTGELYTDRVVSLAGPQVKKPRLVRTQLGANLSQLTAGELAEGENRVISGSVLSGAKAVGVHDYLGRYALQVSVIAEGREQEFLGMIAPYSHKFSITRTVLGAFSKKLFNFTTAVNGSERAMVPIGSYERVMPLDILPTLLLRDLASGDTDSAQALGCLELDEEDLALCTFVCPGKNNYAPMLRAALDKIEKEG.

Belongs to the NqrA family. Composed of six subunits; NqrA, NqrB, NqrC, NqrD, NqrE and NqrF.

It carries out the reaction a ubiquinone + n Na(+)(in) + NADH + H(+) = a ubiquinol + n Na(+)(out) + NAD(+). In terms of biological role, NQR complex catalyzes the reduction of ubiquinone-1 to ubiquinol by two successive reactions, coupled with the transport of Na(+) ions from the cytoplasm to the periplasm. NqrA to NqrE are probably involved in the second step, the conversion of ubisemiquinone to ubiquinol. This is Na(+)-translocating NADH-quinone reductase subunit A from Glaesserella parasuis serovar 5 (strain SH0165) (Haemophilus parasuis).